Reading from the N-terminus, the 592-residue chain is MNVFHDIKETVLAQVAALQAEGRLPEGLETGRVAVEPPREAAHGDMATNAAMVLAKPAGLAPRAVAEMLVEKLVGVDGIVAAETAGPGFINLRLDPKIWRKTLKTVLTLGTAFGASTMGRGAAVNVEFVSANPTGPMHVGHGRGAVFGDALAALLVKAGWAVTREYYVNDAGAQVDSLARALYARYRVAVGDLDEAAFAAMLAAREIEYGGDYLVPVAADIAQADGTRWTTVAESDWLPAFRAIGIERMLALIKEDLAALGVVHDVFTSEQALVRAGRVDEMMTDLESRDLVYVGTLEPPKGKTPDDWEPRPQTLFRATGFGDEVDRPLKKSDGSWTYFASDIAYHHDKFKRGFLGMINVLGADHGGYVKRLKAAVKAVSNGEAELDVKLVQLVKLLDNGEPVKMSKRAGTFITLREVVDEVGKDVVRFIMLTRKNDAALDFDYARVTEKTRDNPVFYVQYAHARACSVARHAAQTFPGRDLSAAALAATADLDLLDADEEMAMVRLLAGWPRLVESAAEAHEPHRVAFYLGEVAAAFHGLWNRGNDNAELRFLLPTDEARSLARLALVQAVASVIASGLEIFGVEPVKEMR.

The 'HIGH' region signature appears at 131–141 (ANPTGPMHVGH).

Belongs to the class-I aminoacyl-tRNA synthetase family. In terms of assembly, monomer.

The protein localises to the cytoplasm. The catalysed reaction is tRNA(Arg) + L-arginine + ATP = L-arginyl-tRNA(Arg) + AMP + diphosphate. The protein is Arginine--tRNA ligase of Rhodospirillum rubrum (strain ATCC 11170 / ATH 1.1.1 / DSM 467 / LMG 4362 / NCIMB 8255 / S1).